The primary structure comprises 508 residues: Photosystem II CP47 reaction center protein (508 aa).

The next 6 membrane-spanning stretches (helical) occupy residues 21–36 (SVHIMHTALVSGWAGS), 101–115 (IVFSGLCFLAAIWHW), 140–156 (GIHLFLAGVACFGFGAF), 203–218 (IAAGTLGILAGLFHLS), 237–252 (VLSSSIAAVFFAAFVV), and 457–472 (TFALLFFFGHIWHGAR).

It belongs to the PsbB/PsbC family. PsbB subfamily. PSII is composed of 1 copy each of membrane proteins PsbA, PsbB, PsbC, PsbD, PsbE, PsbF, PsbH, PsbI, PsbJ, PsbK, PsbL, PsbM, PsbT, PsbX, PsbY, PsbZ, Psb30/Ycf12, at least 3 peripheral proteins of the oxygen-evolving complex and a large number of cofactors. It forms dimeric complexes. Binds multiple chlorophylls. PSII binds additional chlorophylls, carotenoids and specific lipids. serves as cofactor.

Its subcellular location is the plastid. The protein resides in the chloroplast thylakoid membrane. Its function is as follows. One of the components of the core complex of photosystem II (PSII). It binds chlorophyll and helps catalyze the primary light-induced photochemical processes of PSII. PSII is a light-driven water:plastoquinone oxidoreductase, using light energy to abstract electrons from H(2)O, generating O(2) and a proton gradient subsequently used for ATP formation. This Zea mays (Maize) protein is Photosystem II CP47 reaction center protein.